The chain runs to 316 residues: Ribosomal protein L11 methyltransferase (316 aa).

Positions 157, 178, 200, and 243 each coordinate S-adenosyl-L-methionine.

The protein belongs to the methyltransferase superfamily. PrmA family.

The protein resides in the cytoplasm. It catalyses the reaction L-lysyl-[protein] + 3 S-adenosyl-L-methionine = N(6),N(6),N(6)-trimethyl-L-lysyl-[protein] + 3 S-adenosyl-L-homocysteine + 3 H(+). In terms of biological role, methylates ribosomal protein L11. This is Ribosomal protein L11 methyltransferase from Streptococcus pneumoniae (strain 70585).